We begin with the raw amino-acid sequence, 591 residues long: L-fucose isomerase (591 aa).

Catalysis depends on proton acceptor residues E337 and D361. Mn(2+) is bound by residues E337, D361, and H528.

This sequence belongs to the L-fucose isomerase family. As to quaternary structure, homohexamer. Mn(2+) is required as a cofactor.

The protein resides in the cytoplasm. It carries out the reaction L-fucose = L-fuculose. It participates in carbohydrate degradation; L-fucose degradation; L-lactaldehyde and glycerone phosphate from L-fucose: step 1/3. In terms of biological role, converts the aldose L-fucose into the corresponding ketose L-fuculose. This is L-fucose isomerase from Salmonella schwarzengrund (strain CVM19633).